Reading from the N-terminus, the 180-residue chain is MSRLKKLYTEEIRKSLQEKFGYGNTMQIPVLRKIVISMGLAEAAKDKNLFQAHLEELSMISGQKPLVTKARNSIAGFKLREGQGIGAKVTLRGQRMYDFMDRFCNIVSPRIRDFRGFSMKGDGRGCYSLGLDDQQIFPEIDLDRVKRTQGMNITWVTTAQTDVECTTLLELMGLRFKKAQ.

This sequence belongs to the universal ribosomal protein uL5 family. In terms of assembly, part of the 50S ribosomal subunit; part of the 5S rRNA/L5/L18/L25 subcomplex. Contacts the 5S rRNA and the P site tRNA. Forms a bridge to the 30S subunit in the 70S ribosome.

In terms of biological role, this is one of the proteins that bind and probably mediate the attachment of the 5S RNA into the large ribosomal subunit, where it forms part of the central protuberance. In the 70S ribosome it contacts protein S13 of the 30S subunit (bridge B1b), connecting the 2 subunits; this bridge is implicated in subunit movement. Contacts the P site tRNA; the 5S rRNA and some of its associated proteins might help stabilize positioning of ribosome-bound tRNAs. The polypeptide is Large ribosomal subunit protein uL5 (Chlamydia caviae (strain ATCC VR-813 / DSM 19441 / 03DC25 / GPIC) (Chlamydophila caviae)).